Consider the following 109-residue polypeptide: Anther-specific protein MZm3-3 (109 aa).

Residues methionine 1–alanine 41 form the signal peptide. Cystine bridges form between cysteine 45–cysteine 86, cysteine 55–cysteine 75, cysteine 76–cysteine 101, and cysteine 88–cysteine 108.

This sequence belongs to the A9/FIL1 family. In terms of tissue distribution, tapetum of anthers.

Its subcellular location is the secreted. This is Anther-specific protein MZm3-3 from Zea mays (Maize).